The sequence spans 1051 residues: Helicase POLQ-like (1051 aa).

The segment covering 1-10 (MANKHNLCKK) has biased composition (basic residues). 2 disordered regions span residues 1-28 (MANKHNLCKKRSLDLSEESTSESHAKRQ) and 61-112 (LFGT…APTD). 2 stretches are compositionally biased toward polar residues: residues 64–78 (TQATTSTNKMTQSGS) and 89–102 (SFPSAQSVPPNSAS). Positions 103–112 (KPDEASAPTD) are enriched in basic and acidic residues. Residues 274 to 446 (LPAIRQRKNL…FLNADVYTRG (173 aa)) form the Helicase ATP-binding domain. Residue 287 to 294 (LPTSGGKT) coordinates ATP. The short motif at 391–394 (DELH) is the DEAH box element. One can recognise a Helicase C-terminal domain in the interval 497–689 (HLAGLISECA…NEAVGLQSLI (193 aa)).

It belongs to the helicase family. SKI2 subfamily.

It is found in the nucleus. Its subcellular location is the chromosome. The enzyme catalyses Couples ATP hydrolysis with the unwinding of duplex DNA by translocating in the 3'-5' direction.. The catalysed reaction is ATP + H2O = ADP + phosphate + H(+). Its function is as follows. Single-stranded 3'-5' DNA helicase that plays a key role in homology-driven double-strand break (DSB) repair. Involved in different DSB repair mechanisms that are guided by annealing of extensive stretches of complementary bases at break ends, such as microhomology-mediated end-joining (MMEJ), single-strand annealing (SSA) or synthesis-dependent strand annealing (SDSA). This is Helicase POLQ-like from Drosophila melanogaster (Fruit fly).